The chain runs to 221 residues: Probable septum site-determining protein MinC (221 aa).

Belongs to the MinC family. As to quaternary structure, interacts with MinD and FtsZ.

Functionally, cell division inhibitor that blocks the formation of polar Z ring septums. Rapidly oscillates between the poles of the cell to destabilize FtsZ filaments that have formed before they mature into polar Z rings. Prevents FtsZ polymerization. The polypeptide is Probable septum site-determining protein MinC (Shewanella baltica (strain OS223)).